The primary structure comprises 380 residues: RNA-binding motif protein, Y chromosome, family 9 (380 aa).

Residues 8-86 form the RRM domain; it reads GKIFIGGLNI…KRIKVKQARR (79 aa). Disordered regions lie at residues 82–226 and 279–358; these read KQAR…STSR and HEAP…YSAS. Residues 166-178 are compositionally biased toward polar residues; it reads RSATSAQTRSNTG. 2 stretches are compositionally biased toward basic and acidic residues: residues 180–190 and 333–351; these read RGREPHRREIS and IDRE…HSPK.

Testis-specific.

The protein localises to the nucleus. Functionally, RNA-binding protein which may be involved in spermatogenesis. May be required for sperm development, possibly by participating in pre-mRNA splicing in the testis. This is RNA-binding motif protein, Y chromosome, family 9 from Mus musculus (Mouse).